A 229-amino-acid chain; its full sequence is NAD(P)H-hydrate epimerase (229 aa).

Residues 10–217 form the YjeF N-terminal domain; that stretch reads AINVDQELFN…ALQRKYDLNL (208 aa). Position 60–64 (60–64) interacts with (6S)-NADPHX; sequence NNGGD. K(+) contacts are provided by Asn-61 and Asp-125. (6S)-NADPHX-binding positions include 129–135 and Asp-158; that span reads GFSFKPP. Ser-161 is a K(+) binding site.

Belongs to the NnrE/AIBP family. The cofactor is K(+).

The enzyme catalyses (6R)-NADHX = (6S)-NADHX. It carries out the reaction (6R)-NADPHX = (6S)-NADPHX. Functionally, catalyzes the epimerization of the S- and R-forms of NAD(P)HX, a damaged form of NAD(P)H that is a result of enzymatic or heat-dependent hydration. This is a prerequisite for the S-specific NAD(P)H-hydrate dehydratase to allow the repair of both epimers of NAD(P)HX. The chain is NAD(P)H-hydrate epimerase from Drosophila ananassae (Fruit fly).